The following is a 321-amino-acid chain: ATP-dependent 6-phosphofructokinase (321 aa).

Position 10 (glycine 10) interacts with ATP. Residue 20–24 coordinates ADP; the sequence is RAVVR. ATP is bound by residues 71–72 and 101–104; these read RD and GEGT. Glutamate 102 contributes to the Mg(2+) binding site. A substrate-binding site is contributed by 125 to 127; that stretch reads TID. Catalysis depends on aspartate 127, which acts as the Proton acceptor. Arginine 154 lines the ADP pocket. Substrate contacts are provided by residues arginine 162 and 169-171; that span reads MGR. ADP contacts are provided by residues 185–187 and 213–215; these read GAE and KLH. Residues glutamate 222, arginine 246, and 252 to 255 contribute to the substrate site; that span reads HIQR.

It belongs to the phosphofructokinase type A (PFKA) family. ATP-dependent PFK group I subfamily. Prokaryotic clade 'B1' sub-subfamily. As to quaternary structure, homotetramer. The cofactor is Mg(2+).

It localises to the cytoplasm. The catalysed reaction is beta-D-fructose 6-phosphate + ATP = beta-D-fructose 1,6-bisphosphate + ADP + H(+). Its pathway is carbohydrate degradation; glycolysis; D-glyceraldehyde 3-phosphate and glycerone phosphate from D-glucose: step 3/4. With respect to regulation, allosterically activated by ADP and other diphosphonucleosides, and allosterically inhibited by phosphoenolpyruvate. Catalyzes the phosphorylation of D-fructose 6-phosphate to fructose 1,6-bisphosphate by ATP, the first committing step of glycolysis. The sequence is that of ATP-dependent 6-phosphofructokinase from Aquifex aeolicus (strain VF5).